The sequence spans 507 residues: ATP synthase subunit alpha (507 aa).

The disordered stretch occupies residues 118 to 141 (VDGLGPIETTETRPIESPAPGVMD). Residue 172–179 (GDRQTGKT) coordinates ATP.

Belongs to the ATPase alpha/beta chains family. F-type ATPases have 2 components, CF(1) - the catalytic core - and CF(0) - the membrane proton channel. CF(1) has five subunits: alpha(3), beta(3), gamma(1), delta(1), epsilon(1). CF(0) has three main subunits: a(1), b(2) and c(9-12). The alpha and beta chains form an alternating ring which encloses part of the gamma chain. CF(1) is attached to CF(0) by a central stalk formed by the gamma and epsilon chains, while a peripheral stalk is formed by the delta and b chains.

It localises to the cell membrane. The catalysed reaction is ATP + H2O + 4 H(+)(in) = ADP + phosphate + 5 H(+)(out). In terms of biological role, produces ATP from ADP in the presence of a proton gradient across the membrane. The alpha chain is a regulatory subunit. This chain is ATP synthase subunit alpha, found in Anoxybacillus flavithermus (strain DSM 21510 / WK1).